A 60-amino-acid polypeptide reads, in one-letter code: MSAIAPITGSLKKRIMKDIAVGMGLGTVLGSYWWWGFHKPKIAARENYYTQLAEQKAAEE.

The Mitochondrial matrix portion of the chain corresponds to 1–18 (MSAIAPITGSLKKRIMKD). The helical transmembrane segment at 19–37 (IAVGMGLGTVLGSYWWWGF) threads the bilayer. Topologically, residues 38 to 57 (HKPKIAARENYYTQLAEQKA) are mitochondrial intermembrane. Residues 58-60 (AEE) constitute a propeptide, removed in mature form.

This sequence belongs to the fungal cytochrome c oxidase subunit 7a family. In terms of assembly, component of the cytochrome c oxidase (complex IV, CIV), a multisubunit enzyme composed of a catalytic core of 3 subunits and several supernumerary subunits. The complex exists as a monomer or a dimer and forms supercomplexes (SCs) in the inner mitochondrial membrane with ubiquinol-cytochrome c oxidoreductase (cytochrome b-c1 complex, complex III, CIII).

Its subcellular location is the mitochondrion inner membrane. Its pathway is energy metabolism; oxidative phosphorylation. In terms of biological role, component of the cytochrome c oxidase, the last enzyme in the mitochondrial electron transport chain which drives oxidative phosphorylation. The respiratory chain contains 3 multisubunit complexes succinate dehydrogenase (complex II, CII), ubiquinol-cytochrome c oxidoreductase (cytochrome b-c1 complex, complex III, CIII) and cytochrome c oxidase (complex IV, CIV), that cooperate to transfer electrons derived from NADH and succinate to molecular oxygen, creating an electrochemical gradient over the inner membrane that drives transmembrane transport and the ATP synthase. Cytochrome c oxidase is the component of the respiratory chain that catalyzes the reduction of oxygen to water. Electrons originating from reduced cytochrome c in the intermembrane space (IMS) are transferred via the dinuclear copper A center (CU(A)) of subunit 2 and heme A of subunit 1 to the active site in subunit 1, a binuclear center (BNC) formed by heme A3 and copper B (CU(B)). The BNC reduces molecular oxygen to 2 water molecules using 4 electrons from cytochrome c in the IMS and 4 protons from the mitochondrial matrix. This is Cytochrome c oxidase subunit 9, mitochondrial (COX9) from Eremothecium gossypii (strain ATCC 10895 / CBS 109.51 / FGSC 9923 / NRRL Y-1056) (Yeast).